Consider the following 599-residue polypeptide: Aspartate--tRNA(Asp/Asn) ligase (599 aa).

Glutamate 172 is an L-aspartate binding site. Positions 196 to 199 are aspartate; sequence QLFK. Arginine 218 is a binding site for L-aspartate. Residues 218-220 and glutamine 227 each bind ATP; that span reads RDE. Position 451 (histidine 451) interacts with L-aspartate. ATP is bound at residue glutamate 485. Arginine 492 contributes to the L-aspartate binding site. 537-540 contacts ATP; sequence GLDR.

The protein belongs to the class-II aminoacyl-tRNA synthetase family. Type 1 subfamily. As to quaternary structure, homodimer.

It is found in the cytoplasm. It carries out the reaction tRNA(Asx) + L-aspartate + ATP = L-aspartyl-tRNA(Asx) + AMP + diphosphate. Aspartyl-tRNA synthetase with relaxed tRNA specificity since it is able to aspartylate not only its cognate tRNA(Asp) but also tRNA(Asn). Reaction proceeds in two steps: L-aspartate is first activated by ATP to form Asp-AMP and then transferred to the acceptor end of tRNA(Asp/Asn). This Aromatoleum aromaticum (strain DSM 19018 / LMG 30748 / EbN1) (Azoarcus sp. (strain EbN1)) protein is Aspartate--tRNA(Asp/Asn) ligase.